The primary structure comprises 619 residues: Chitinase C (619 aa).

The N-terminal stretch at 1 to 30 (MRFRHKAAALAATLALPLAGLVGLASPAQA) is a signal peptide. The CBM2 domain maps to 31 to 134 (ATSATATFAK…KLNGGSCDGT (104 aa)). Positions 144–229 (APGTPTASNI…GAVKVTTTGG (86 aa)) constitute a Fibronectin type-III domain. The interval 212-236 (ADQTGPASGAVKVTTTGGGDGGNPG) is disordered. A compositionally biased stretch (gly residues) spans 227-236 (TGGGDGGNPG). A GH18 domain is found at 240 to 619 (EVKMGYFTNW…TPAVRTTRRH (380 aa)). Chitin contacts are provided by residues 312-313 (DQ) and 339-342 (GGWT). Glutamate 382 (proton donor) is an active-site residue. Residues tyrosine 383, 449-452 (MTYD), and tryptophan 589 each bind chitin.

Belongs to the glycosyl hydrolase 18 family. Chitinase class II subfamily.

It carries out the reaction Random endo-hydrolysis of N-acetyl-beta-D-glucosaminide (1-&gt;4)-beta-linkages in chitin and chitodextrins.. The polypeptide is Chitinase C (chiC) (Streptomyces lividans).